Here is a 146-residue protein sequence, read N- to C-terminus: MTLTKGSFTYSSGEEYRGEWKEGRRHGFGQLMFADGGTYLGHFENGLFNGFGVLTFSDGSRYEGEFAQGKFNGVGVFIRYDNMTFEGEFKNGRVDGFGLLTFPDGSHGIPRNEGLFENNKLLRREKCSAIVQRAQSASKSARNLTA.

MORN repeat units follow at residues 16-38, 39-61, 62-84, and 85-107; these read YRGE…DGGT, YLGH…DGSR, YEGE…DNMT, and FEGE…DGSH.

As to quaternary structure, interacts with MYO3A.

It localises to the cytoplasm. The protein resides in the cell projection. It is found in the filopodium tip. Its subcellular location is the stereocilium. Its function is as follows. Plays a role in promoting axonal degeneration following neuronal injury by toxic insult or trauma. The protein is MORN repeat-containing protein 4 (MORN4) of Homo sapiens (Human).